The primary structure comprises 593 residues: MTLKIGGIVPIVRVMRDTIIQRPVSTFVRYHSKRSRSFKKKANHKPGQVIRSKLGKTLEAPKTQPKLFSFGNFSGLDQPENKLKEMSSNAIKNITSFESLRIFPTVRSAMLEEIKYGYNLKSTYIKSKEELEIKPSPVQIAAIRKINQPRLRNVNAEKKLADKKASGQEILEDLQKSNEMNRLKIFTIAAETGSGKTWAYLAPLLSKLKEEDMRVFNMSEQSYADAKKTSIIRSVILLPTHELVEQVYDSLKRASKASIDLEASVNKKILQDPQYARYLSLPENQTSLNLNVVKWGSGDSHQKLFDAGRKRIDVLVTTPAKIQGLAKLNNVSRPFRLFNFVEYCVVDEADTLMDKSWIVDTTSVIRRLSKCKDLIFCSATIPKEFKKTLGKMFPDEFSIINIVTPSLHKIPKQINLKVIDAQLSPYNGSKTRCLAQALYAIHNDGTEQGYVKRILVFVNEKRDVQPLADTLIEKFGHREEDIIGITGADNADDRLAKIEPFLKPAELLEEDLDGSKVKVLITTDLLARGLNFNGIKNVILMDLPNTSVDLVHRVGRTGRMRQSGRVFVIIDKKTGKSWIKGLPKVIKKGIPLG.

The transit peptide at 1-36 directs the protein to the mitochondrion; the sequence is MTLKIGGIVPIVRVMRDTIIQRPVSTFVRYHSKRSR. Residues 132–139 carry the Q motif motif; sequence EIKPSPVQ. In terms of domain architecture, Helicase ATP-binding spans 177–399; it reads SNEMNRLKIF…GKMFPDEFSI (223 aa). 190 to 197 contributes to the ATP binding site; the sequence is AETGSGKT. The short motif at 347 to 350 is the DEAD box element; it reads DEAD. The Helicase C-terminal domain maps to 433 to 593; it reads CLAQALYAIH…KVIKKGIPLG (161 aa).

This sequence belongs to the DEAD box helicase family. MRH4 subfamily.

Its subcellular location is the mitochondrion. The catalysed reaction is ATP + H2O = ADP + phosphate + H(+). In terms of biological role, ATP-binding RNA helicase involved in mitochondrial RNA metabolism. Required for maintenance of mitochondrial DNA. The protein is ATP-dependent RNA helicase MRH4, mitochondrial (MRH4) of Debaryomyces hansenii (strain ATCC 36239 / CBS 767 / BCRC 21394 / JCM 1990 / NBRC 0083 / IGC 2968) (Yeast).